Reading from the N-terminus, the 429-residue chain is Serine hydroxymethyltransferase (429 aa).

Residue 120 to 122 coordinates (6S)-5,6,7,8-tetrahydrofolate; sequence GHI. Lys226 carries the N6-(pyridoxal phosphate)lysine modification.

This sequence belongs to the SHMT family. In terms of assembly, homodimer. Pyridoxal 5'-phosphate serves as cofactor.

Its subcellular location is the cytoplasm. It functions in the pathway amino-acid biosynthesis; glycine biosynthesis; glycine from L-serine: step 1/1. In terms of biological role, catalyzes the reversible interconversion of serine and glycine with a modified folate serving as the one-carbon carrier. Also exhibits a pteridine-independent aldolase activity toward beta-hydroxyamino acids, producing glycine and aldehydes, via a retro-aldol mechanism. This chain is Serine hydroxymethyltransferase, found in Pyrobaculum arsenaticum (strain DSM 13514 / JCM 11321 / PZ6).